The chain runs to 450 residues: MTENEQIFWNRVLELAQSQLKQATYEFFVHDARLIKVDNHVATIFLDQMKELFWEKNLKDVILTAGFEVYNAQIAVDYVYEEDLIIEQQHQGQQGYTEQAFQQLPAVQSDLNPKYSFDNFIQGDENRWAVAASIAVANTPGTTYNPLFIWGGPGLGKTHLLNAIGNSVLLENPNARIKYITAENFINEFVVHIRLDTMDELKEKFRNLDLLLIDDIQSLAKKTLSGTQEEFFNTFNALHNNNKQIVLTSDRTPDHLNDLEDRLVTRFKWGLTVNITPPDFETRVAILTNKIQEYNFIFPQDTIEYLAGQFDSNVRDLEGALKDISLVANFKQIDTITVDIAAEAIRARKQDGPKMTVIPIEEIQAQVGKFYGVTVKEIKATKRTQDIVLARQVAMFLAREMTDNSLPKIGKEFGGRDHSTVLHAYNKIKNMIGQDESLRIEIETIKNKIK.

Residues 1 to 84 (MTENEQIFWN…AVDYVYEEDL (84 aa)) are domain I, interacts with DnaA modulators. Positions 84-109 (LIIEQQHQGQQGYTEQAFQQLPAVQS) are domain II. The interval 110 to 328 (DLNPKYSFDN…GALKDISLVA (219 aa)) is domain III, AAA+ region. ATP-binding residues include Gly-154, Gly-156, Lys-157, and Thr-158. Positions 329 to 450 (NFKQIDTITV…EIETIKNKIK (122 aa)) are domain IV, binds dsDNA.

The protein belongs to the DnaA family. As to quaternary structure, oligomerizes as a right-handed, spiral filament on DNA at oriC.

The protein localises to the cytoplasm. In terms of biological role, plays an essential role in the initiation and regulation of chromosomal replication. ATP-DnaA binds to the origin of replication (oriC) to initiate formation of the DNA replication initiation complex once per cell cycle. Binds the DnaA box (a 9 base pair repeat at the origin) and separates the double-stranded (ds)DNA. Forms a right-handed helical filament on oriC DNA; dsDNA binds to the exterior of the filament while single-stranded (ss)DNA is stabiized in the filament's interior. The ATP-DnaA-oriC complex binds and stabilizes one strand of the AT-rich DNA unwinding element (DUE), permitting loading of DNA polymerase. After initiation quickly degrades to an ADP-DnaA complex that is not apt for DNA replication. Binds acidic phospholipids. This is Chromosomal replication initiator protein DnaA from Streptococcus equi subsp. zooepidemicus (strain MGCS10565).